A 255-amino-acid polypeptide reads, in one-letter code: Ribonuclease HII (255 aa).

The RNase H type-2 domain maps to 72–255 (AIICGIDEVG…KSFEPIKSLL (184 aa)). Residues Asp78, Glu79, and Asp170 each coordinate a divalent metal cation.

The protein belongs to the RNase HII family. Requires Mn(2+) as cofactor. Mg(2+) serves as cofactor.

It is found in the cytoplasm. The enzyme catalyses Endonucleolytic cleavage to 5'-phosphomonoester.. Functionally, endonuclease that specifically degrades the RNA of RNA-DNA hybrids. This chain is Ribonuclease HII, found in Staphylococcus aureus (strain MSSA476).